Here is a 447-residue protein sequence, read N- to C-terminus: Beclin-2 (447 aa).

Residues 169 to 228 (EALHAELCAELSSLEQEEARLTQELEDLDGHHARVAAELRAAQAESKELYKQHEQHRVEY) are a coiled coil. Positions 186–256 (EARLTQELED…NQLTYALSQQ (71 aa)) are required for homodimer formation.

It belongs to the beclin family. As to quaternary structure, homodimer (via coiled-coil domain). Interacts (via coiled-coil domain) with ATG14 (via coiled-coil domain); this interaction is tighter than BECN2 self-association. Interacts with AMBRA1, UVRAG and PIK3C3/VPS34; these interactions are not disrupted by starvation. Does not interact with RUBCN. Interacts (via N-terminus) with GPRASP1/GASP1; the interaction is direct. In terms of tissue distribution, expressed in brain, skeletal muscle, placenta, thymus and uterus. Expressed at a lower level in liver, testis, stomach, and 17-day-old embryos.

It localises to the cytoplasm. In terms of biological role, involved in 2 distinct lysosomal degradation pathways: acts as a regulator of autophagy and as a regulator of G-protein coupled receptors turnover. Regulates degradation in lysosomes of a variety of G-protein coupled receptors via its interaction with GPRASP1/GASP1. This Mus musculus (Mouse) protein is Beclin-2.